A 595-amino-acid polypeptide reads, in one-letter code: Indole-3-acetic acid-amido synthetase GH3.3 (595 aa).

This sequence belongs to the IAA-amido conjugating enzyme family.

Functionally, catalyzes the synthesis of indole-3-acetic acid (IAA)-amino acid conjugates, providing a mechanism for the plant to cope with the presence of excess auxin. Strongly reactive with Glu, Gln, Trp, Asp, Ala, Leu, Phe, Gly, Tyr, Met, Ile and Val. Little or no product formation with His, Ser, Thr, Arg, Lys, or Cys. Also active on pyruvic and butyric acid analogs of IAA, PAA and the synthetic auxin naphthaleneacetic acid (NAA). The two chlorinated synthetic auxin herbicides 2,4-D and 3,6-dichloro-o-anisic acid (dicamba) cannot be used as substrates. The sequence is that of Indole-3-acetic acid-amido synthetase GH3.3 (GH3.3) from Arabidopsis thaliana (Mouse-ear cress).